The following is a 157-amino-acid chain: Protein-export protein SecB (157 aa).

The protein belongs to the SecB family. As to quaternary structure, homotetramer, a dimer of dimers. One homotetramer interacts with 1 SecA dimer.

The protein resides in the cytoplasm. In terms of biological role, one of the proteins required for the normal export of preproteins out of the cell cytoplasm. It is a molecular chaperone that binds to a subset of precursor proteins, maintaining them in a translocation-competent state. It also specifically binds to its receptor SecA. In Rhodopseudomonas palustris (strain TIE-1), this protein is Protein-export protein SecB.